Consider the following 855-residue polypeptide: DNA mismatch repair protein MutS (855 aa).

616 to 623 is a binding site for ATP; it reads GPNMGGKS.

It belongs to the DNA mismatch repair MutS family.

Its function is as follows. This protein is involved in the repair of mismatches in DNA. It is possible that it carries out the mismatch recognition step. This protein has a weak ATPase activity. This Salmonella newport (strain SL254) protein is DNA mismatch repair protein MutS.